We begin with the raw amino-acid sequence, 365 residues long: MEPMESCSVPPGFRFHPTDEELVGYYLRKKIASQKIDLDVIRDIDLYRIEPWDLQEQCRIGYEEQNEWYFFSHKDKKYPTGTRTNRATMAGFWKATGRDKAVYDKTKLIGMRKTLVFYKGRAPNGKKSDWIMHEYRLESDENAPPQEEGWVVCRAFKKRATGQAKNTETWSSSYFYDEVAPNGVNSVMDPIDYISKQQHNIFGKGLMCKQELEGMVDGINYIQSNQFIQLPQLQSPSLPLMKRPSSSMSITSMDNNYNYKLPLADEESFESFIRGEDRRKKKKQVMMTGNWRELDKFVASQLMSQEDNGTSSFAGHHIVNEDKNNNDVEMDSSMFLSEREEENRFVSEFLSTNSDYDIGICVFDN.

One can recognise an NAC domain in the interval 9 to 158 (VPPGFRFHPT…GWVVCRAFKK (150 aa)). A DNA-binding region spans residues 109 to 164 (IGMRKTLVFYKGRAPNGKKSDWIMHEYRLESDENAPPQEEGWVVCRAFKKRATGQA).

Belongs to the plant vascular related NAC-domain protein family. Interacts with NAC030/VND7. In terms of tissue distribution, expressed in root metaxylem pole and in shoot pre-procambium and procambium. Present in root developing xylems. Specifically expressed in vessels but not in interfascicular fibers in stems.

Its subcellular location is the nucleus. Functionally, transcription activator that binds to the secondary wall NAC binding element (SNBE), 5'-(T/A)NN(C/T)(T/C/G)TNNNNNNNA(A/C)GN(A/C/T)(A/T)-3', in the promoter of target genes. Involved in xylem formation by promoting the expression of secondary wall-associated transcription factors and of genes involved in secondary wall biosynthesis and programmed cell death, genes driven by the secondary wall NAC binding element (SNBE). Triggers thickening of secondary walls. The chain is NAC domain-containing protein 37 from Arabidopsis thaliana (Mouse-ear cress).